We begin with the raw amino-acid sequence, 54 residues long: Large ribosomal subunit protein bL33A (54 aa).

This sequence belongs to the bacterial ribosomal protein bL33 family.

The polypeptide is Large ribosomal subunit protein bL33A (Streptomyces griseus subsp. griseus (strain JCM 4626 / CBS 651.72 / NBRC 13350 / KCC S-0626 / ISP 5235)).